Reading from the N-terminus, the 114-residue chain is MSLLLLLLACGLTCLGQVAQKFAVESWRGQPSSALQKLRSGWLWLALFSLGLGLLVWLLVLQRMEVGVAYPMLSLNFVFITLIAHFVFREHIDRRHWFGVALVIGGVLLLSRHA.

A run of 2 helical transmembrane segments spans residues 41-61 (GWLW…LLVL) and 68-88 (VAYP…HFVF). Residues 43-112 (LWLALFSLGL…VIGGVLLLSR (70 aa)) enclose the EamA domain.

This sequence belongs to the ArnE family. Heterodimer of ArnE and ArnF.

The protein localises to the cell inner membrane. It participates in bacterial outer membrane biogenesis; lipopolysaccharide biosynthesis. Translocates 4-amino-4-deoxy-L-arabinose-phosphoundecaprenol (alpha-L-Ara4N-phosphoundecaprenol) from the cytoplasmic to the periplasmic side of the inner membrane. In Pseudomonas fluorescens (strain ATCC BAA-477 / NRRL B-23932 / Pf-5), this protein is Probable 4-amino-4-deoxy-L-arabinose-phosphoundecaprenol flippase subunit ArnE.